We begin with the raw amino-acid sequence, 238 residues long: Small ribosomal subunit protein uS2c (238 aa).

It belongs to the universal ribosomal protein uS2 family.

It is found in the plastid. The protein resides in the chloroplast. This is Small ribosomal subunit protein uS2c (rps2) from Nuphar advena (Common spatterdock).